The primary structure comprises 248 residues: PF03932 family protein CutC (248 aa).

This sequence belongs to the CutC family.

The protein resides in the cytoplasm. The chain is PF03932 family protein CutC from Porphyromonas gingivalis (strain ATCC 33277 / DSM 20709 / CIP 103683 / JCM 12257 / NCTC 11834 / 2561).